The primary structure comprises 290 residues: Shikimate dehydrogenase (NADP(+)) (290 aa).

Shikimate contacts are provided by residues 24 to 26 (SKS) and T71. Catalysis depends on K75, which acts as the Proton acceptor. Positions 96 and 111 each coordinate shikimate. Residues 135-139 (GAGGA), 159-164 (NRTKQR), and I228 each bind NADP(+). Y230 contacts shikimate. G251 lines the NADP(+) pocket.

This sequence belongs to the shikimate dehydrogenase family. In terms of assembly, homodimer.

The catalysed reaction is shikimate + NADP(+) = 3-dehydroshikimate + NADPH + H(+). It participates in metabolic intermediate biosynthesis; chorismate biosynthesis; chorismate from D-erythrose 4-phosphate and phosphoenolpyruvate: step 4/7. Involved in the biosynthesis of the chorismate, which leads to the biosynthesis of aromatic amino acids. Catalyzes the reversible NADPH linked reduction of 3-dehydroshikimate (DHSA) to yield shikimate (SA). This chain is Shikimate dehydrogenase (NADP(+)), found in Bartonella tribocorum (strain CIP 105476 / IBS 506).